Consider the following 353-residue polypeptide: Outer membrane protein P5 (353 aa).

The N-terminal stretch at 1 to 21 (MKKTAIALVVAGLAAASVAQA) is a signal peptide. Beta stranded transmembrane passes span 27–37 (TFYAGVKAGQA), 58–69 (SFTYGVFGGYQI), 77–85 (LAVELGYDD), 104–115 (HGAHLSLKGSYE), 120–128 (LDVYGKAGV), 158–167 (GLFAVGAEYA), 172–179 (LAVRLEYQ), and 205–213 (SINAGISYR). Positions 227–353 (VVSKTFSLNS…RVEIAVNGTK (127 aa)) constitute an OmpA-like domain. C326 and C338 are disulfide-bonded.

The protein belongs to the outer membrane OOP (TC 1.B.6) superfamily. OmpA family. In terms of assembly, monomer and homodimer.

Its subcellular location is the cell outer membrane. Functionally, with TolR probably plays a role in maintaining the position of the peptidoglycan cell wall in the periplasm. Acts as a porin with low permeability that allows slow penetration of small solutes; an internal gate slows down solute passage. The chain is Outer membrane protein P5 from Haemophilus influenzae.